The following is a 332-amino-acid chain: Methylthioribose-1-phosphate isomerase (332 aa).

Substrate-binding positions include 44–46, R87, and Q192; that span reads RGA. The active-site Proton donor is D233. 243 to 244 provides a ligand contact to substrate; it reads NK.

Belongs to the eIF-2B alpha/beta/delta subunits family. MtnA subfamily.

It catalyses the reaction 5-(methylsulfanyl)-alpha-D-ribose 1-phosphate = 5-(methylsulfanyl)-D-ribulose 1-phosphate. It participates in amino-acid biosynthesis; L-methionine biosynthesis via salvage pathway; L-methionine from S-methyl-5-thio-alpha-D-ribose 1-phosphate: step 1/6. In terms of biological role, catalyzes the interconversion of methylthioribose-1-phosphate (MTR-1-P) into methylthioribulose-1-phosphate (MTRu-1-P). This is Methylthioribose-1-phosphate isomerase from Dehalococcoides mccartyi (strain ATCC BAA-2100 / JCM 16839 / KCTC 5957 / BAV1).